Reading from the N-terminus, the 692-residue chain is Epithelial sodium channel subunit alpha (692 aa).

The segment at 1 to 67 (MSSIKGNKLE…PAAPQQPTAE (67 aa)) is disordered. The Cytoplasmic segment spans residues 1–108 (MSSIKGNKLE…CSQHNRMKTA (108 aa)). Residues 56–65 (PEPAAPQQPT) are compositionally biased toward low complexity. The chain crosses the membrane as a helical span at residues 109-129 (FWAVLWLCTFGMMYWQFGLLF). Topologically, residues 130–585 (GEYFSYPVSL…SQWSLWFGSS (456 aa)) are extracellular. Cystine bridges form between Cys-156-Cys-328, Cys-252-Cys-259, Cys-305-Cys-312, Cys-417-Cys-502, Cys-439-Cys-479, Cys-439-Cys-498, Cys-443-Cys-494, Cys-452-Cys-479, Cys-452-Cys-502, and Cys-454-Cys-468. The interval 198 to 266 (RSRRDLRGTL…SDCFYQTYSS (69 aa)) is gating release of inhibition by proteolysis (GRIP); protease-sensitive region that is responsible for the proteolytic activation of the channel. The chain crosses the membrane as a helical span at residues 586-606 (VLSVVEMAELIFDLLVITFLM). Residues 607-692 (LLRRFRSRYW…GSSACPLGGP (86 aa)) are Cytoplasmic-facing. Positions 627–692 (EVASTLASSP…GSSACPLGGP (66 aa)) are disordered. The segment covering 628–637 (VASTLASSPP) has biased composition (polar residues). Residues 653-666 (GPAPSPALTAPPPA) show a composition bias toward pro residues. The PY motif; recruits WW domain-containing proteins and is thereby required for ubiquitination and inhibition of the channel by NEDD4 and NEDD4L signature appears at 663–667 (PPPAY). The span at 682 to 692 (AGSSACPLGGP) shows a compositional bias: low complexity.

This sequence belongs to the amiloride-sensitive sodium channel (TC 1.A.6) family. SCNN1A subfamily. Heterotrimer; containing an alpha/SCNN1A, a beta/SCNN1B and a gamma/SCNN1G subunit. Interacts with WWP1 (via WW domains). Interacts with WWP2 (via WW domains); inhibits the channel. Interacts with BPIFA1; the interaction is indirect via SCNN1B and inhibits the proteolytic processing of SCNN1A and SCNN1G and the activation of ENaC. Interacts with the full-length immature form of PCSK9 (pro-PCSK9). Post-translationally, ubiquitinated. Can be ubiquitinated at multiple sites and undergo monoubiquitination and polyubiquitination. Ubiquitination by NEDD4 or NEDD4L inhibits the ENaC channel through endocytosis, intracellular retention and degradation of its individual subunits. In terms of processing, N-glycosylated. ENaC is activated through the proteolytic maturation of its subunits. Furin cleaves the SCNN1A subunit, which results in a stepwise increase in the open probability of the channel due to the release of an inhibitory tract. BPIFA1, which is recruited by the SCNN1B subunit, prevents the proteolytic activation of ENaC.

It is found in the apical cell membrane. Its subcellular location is the cell projection. The protein resides in the cilium. The protein localises to the cytoplasmic granule. It localises to the cytoplasm. It is found in the cytoplasmic vesicle. Its subcellular location is the secretory vesicle. The protein resides in the acrosome. The protein localises to the flagellum. It carries out the reaction Na(+)(in) = Na(+)(out). Its activity is regulated as follows. Originally identified and characterized by its inhibition by the diuretic drug amiloride. Functionally, this is one of the three pore-forming subunits of the heterotrimeric epithelial sodium channel (ENaC), a critical regulator of sodium balance and fluid homeostasis. ENaC operates in epithelial tissues, where it mediates the electrodiffusion of sodium ions from extracellular fluid through the apical membrane of cells, with water following osmotically. It plays a key role in maintaining sodium homeostasis through electrogenic sodium reabsorption in the kidneys. Additionally, ENaC is essential for airway surface liquid homeostasis, which is crucial for proper mucus clearance. This is Epithelial sodium channel subunit alpha from Pan troglodytes (Chimpanzee).